We begin with the raw amino-acid sequence, 156 residues long: ATP synthase subunit b (156 aa).

Residues 7 to 29 traverse the membrane as a helical segment; sequence LIGQSVAFLIFVWFCMKFVWPPL.

This sequence belongs to the ATPase B chain family. As to quaternary structure, F-type ATPases have 2 components, F(1) - the catalytic core - and F(0) - the membrane proton channel. F(1) has five subunits: alpha(3), beta(3), gamma(1), delta(1), epsilon(1). F(0) has three main subunits: a(1), b(2) and c(10-14). The alpha and beta chains form an alternating ring which encloses part of the gamma chain. F(1) is attached to F(0) by a central stalk formed by the gamma and epsilon chains, while a peripheral stalk is formed by the delta and b chains.

It is found in the cell inner membrane. Functionally, f(1)F(0) ATP synthase produces ATP from ADP in the presence of a proton or sodium gradient. F-type ATPases consist of two structural domains, F(1) containing the extramembraneous catalytic core and F(0) containing the membrane proton channel, linked together by a central stalk and a peripheral stalk. During catalysis, ATP synthesis in the catalytic domain of F(1) is coupled via a rotary mechanism of the central stalk subunits to proton translocation. Its function is as follows. Component of the F(0) channel, it forms part of the peripheral stalk, linking F(1) to F(0). This chain is ATP synthase subunit b, found in Shewanella denitrificans (strain OS217 / ATCC BAA-1090 / DSM 15013).